The primary structure comprises 56 residues: Large ribosomal subunit protein bL33c (56 aa).

It belongs to the bacterial ribosomal protein bL33 family.

The protein localises to the plastid. It localises to the chloroplast. This Rhodomonas salina (Cryptomonas salina) protein is Large ribosomal subunit protein bL33c.